Here is a 204-residue protein sequence, read N- to C-terminus: Large ribosomal subunit protein uL4 (204 aa).

The interval 49–74 (AKKRGEVSGGGKKPWSQKGGGRARAG) is disordered. Gly residues predominate over residues 55–71 (VSGGGKKPWSQKGGGRA).

This sequence belongs to the universal ribosomal protein uL4 family. Part of the 50S ribosomal subunit.

Its function is as follows. One of the primary rRNA binding proteins, this protein initially binds near the 5'-end of the 23S rRNA. It is important during the early stages of 50S assembly. It makes multiple contacts with different domains of the 23S rRNA in the assembled 50S subunit and ribosome. In terms of biological role, forms part of the polypeptide exit tunnel. This is Large ribosomal subunit protein uL4 from Wolinella succinogenes (strain ATCC 29543 / DSM 1740 / CCUG 13145 / JCM 31913 / LMG 7466 / NCTC 11488 / FDC 602W) (Vibrio succinogenes).